We begin with the raw amino-acid sequence, 310 residues long: Solute carrier family 25 member 47 (310 aa).

Solcar repeat units lie at residues 1-80, 93-208, and 217-304; these read MDFV…CLAH, PTKA…LSEW, and PDVL…VLRL. 6 consecutive transmembrane segments (helical) span residues 3-23, 49-69, 98-116, 192-212, 219-239, and 275-295; these read FVAG…LDTV, LWGF…VSSV, ITLS…TSPT, GHSF…LTPA, VLGV…VATP, and VLFK…MVVF.

The protein belongs to the mitochondrial carrier (TC 2.A.29) family.

The protein localises to the mitochondrion inner membrane. Its subcellular location is the mitochondrion outer membrane. The catalysed reaction is NAD(+)(in) = NAD(+)(out). It carries out the reaction acetyl-CoA(in) = acetyl-CoA(out). Functionally, mitochondrial NAD(+) transporter that acts as a 'metabolic gate' in hepatic lipogenesis. Provides NAD(+) substrate to mitochondrial SIRT3 deacetylase and enables its NAD(+)-dependent activities in mitochondrial energy metabolism. This triggers downstream activation of PRKAA1/AMPK-alpha signaling cascade that negatively regulates sterol regulatory element-binding protein (SREBP) transcriptional activities and ATP-consuming lipogenesis to restore cellular energy balance. May transport other mitochondrial metabolites having an aromatic nucleotide and phosphate groups, such as acetyl-CoA. Does not transport amino acids. The transport mechanism remains to be elucidated. In Rattus norvegicus (Rat), this protein is Solute carrier family 25 member 47.